Consider the following 110-residue polypeptide: V-type proton ATPase subunit G 1 (110 aa).

Belongs to the V-ATPase G subunit family. V-ATPase is a heteromultimeric enzyme composed of a peripheral catalytic V1 complex (components A to H) attached to an integral membrane V0 proton pore complex (components: a, c, c', c'' and d).

In terms of biological role, catalytic subunit of the peripheral V1 complex of vacuolar ATPase (V-ATPase). V-ATPase is responsible for acidifying a variety of intracellular compartments in eukaryotic cells. The chain is V-type proton ATPase subunit G 1 (VATG1) from Nicotiana tabacum (Common tobacco).